Consider the following 707-residue polypeptide: Keratin, type II cytoskeletal 2 epidermal (707 aa).

The interval 1–20 is disordered; the sequence is MSCQISCRSRRGGGGGGGGG. The head stretch occupies residues 1 to 198; sequence MSCQISCRSR…DPEIQNVKSQ (198 aa). The residue at position 22 (arginine 22) is an Asymmetric dimethylarginine. Serine 25 and serine 28 each carry phosphoserine. Low complexity predominate over residues 29-38; sequence AVVSGGSRRS. The segment at 29 to 59 is disordered; it reads AVVSGGSRRSNTSFSCISRHGGGRGGSGGGG. Arginine 52 carries the post-translational modification Omega-N-methylarginine. Serine 64 carries the phosphoserine modification. The segment at 199–234 is coil 1A; the sequence is EREQIKTLNNKFASFIDKVRFLEQQNQVLRTKWELL. Residues 199–512 form the IF rod domain; it reads EREQIKTLNN…KLLEGEECRM (314 aa). Positions 235 to 253 are linker 1; the sequence is QQLDVGSRTTNLDPIFQAY. Residues 254–345 are coil 1B; sequence IGMLKKQVDR…TLYDAELSQL (92 aa). Residues 346 to 369 are linker 12; the sequence is QQDVTDTNVILSMDNNRNLDLDSI. Residues 370-508 form a coil 2 region; the sequence is IAEVQNQYEM…ATYRKLLEGE (139 aa). The tail stretch occupies residues 509-707; sequence ECRMSGDFSD…CGSGVTFSFR (199 aa). The segment at 531–707 is disordered; that stretch reads SSVASKTGFG…CGSGVTFSFR (177 aa). The segment covering 539-700 has biased composition (gly residues); sequence FGSGGQSSGG…GSGSGEGCGS (162 aa). Residues arginine 555, arginine 593, arginine 607, and arginine 675 each carry the omega-N-methylarginine modification.

This sequence belongs to the intermediate filament family. In terms of assembly, heterotetramer of two type I and two type II keratins. Associates with KRT10. Expressed predominantly in the suprabasal layers of the plantar epidermis outside of the footpads (at protein level). Expressed in the suprabasal layers of the interfollicular epidermis of the ear, in the interscale regions distant from the hair follicles in the tail, and in the soles of the footpads (at protein level). Expressed mainly in the middle spinous and granular cells of the epidermis of adult tail, nipple and footsole skin. Also found in ear.

It localises to the cytoplasm. In terms of biological role, probably contributes to terminal cornification. Associated with keratinocyte activation, proliferation and keratinization. Required for maintenance of corneocytes and keratin filaments in suprabasal keratinocytes in the epidermis of the ear, potentially via moderation of expression and localization of keratins and their partner proteins. Plays a role in the establishment of the epidermal barrier on plantar skin. The sequence is that of Keratin, type II cytoskeletal 2 epidermal from Mus musculus (Mouse).